A 684-amino-acid polypeptide reads, in one-letter code: UvrABC system protein B (684 aa).

Residues 30–188 (EGVQRGDRWQ…QELVSLHYVR (159 aa)) enclose the Helicase ATP-binding domain. 43–50 (GVTGSGKT) contacts ATP. Positions 96-119 (YYDFYQPEAYLPALDKYIAKDLRI) match the Beta-hairpin motif. In terms of domain architecture, Helicase C-terminal spans 435 to 601 (QIDDLLGEIR…SIIKSVEQVL (167 aa)). In terms of domain architecture, UVR spans 641–676 (YSMAESLRLEMQEAALKMEYEKAAYLRDEITKFEHR).

The protein belongs to the UvrB family. Forms a heterotetramer with UvrA during the search for lesions. Interacts with UvrC in an incision complex.

The protein resides in the cytoplasm. The UvrABC repair system catalyzes the recognition and processing of DNA lesions. A damage recognition complex composed of 2 UvrA and 2 UvrB subunits scans DNA for abnormalities. Upon binding of the UvrA(2)B(2) complex to a putative damaged site, the DNA wraps around one UvrB monomer. DNA wrap is dependent on ATP binding by UvrB and probably causes local melting of the DNA helix, facilitating insertion of UvrB beta-hairpin between the DNA strands. Then UvrB probes one DNA strand for the presence of a lesion. If a lesion is found the UvrA subunits dissociate and the UvrB-DNA preincision complex is formed. This complex is subsequently bound by UvrC and the second UvrB is released. If no lesion is found, the DNA wraps around the other UvrB subunit that will check the other stand for damage. In Chlorobium limicola (strain DSM 245 / NBRC 103803 / 6330), this protein is UvrABC system protein B.